Here is a 142-residue protein sequence, read N- to C-terminus: Hdr-like menaquinol oxidoreductase cytochrome c subunit (142 aa).

Topologically, residues 1-6 are cytoplasmic; it reads MYNKKY. A helical transmembrane segment spans residues 7 to 27; that stretch reads VIPLILVFLIGFFTPYWYNAM. The Extracellular segment spans residues 28-142; sequence AGTLGHVPTL…GIEELSKYFS (115 aa). The heme site is built by Cys-93, Cys-96, His-97, Cys-104, Cys-107, His-108, Cys-117, Cys-120, and His-121.

As to quaternary structure, consists of five subunits: an integral membrane subunit, a cytochrome b-like subunit, a cytochrome c subunit and two iron-sulfur subunits. Binds 3 heme groups per subunit.

It localises to the cell membrane. Has menaquinol-oxidizing activity. HmeA, HmeB and HmeE subunits may together catalyze electron transfer from menaquinol to cytochrome c. This is Hdr-like menaquinol oxidoreductase cytochrome c subunit (hmeE) from Archaeoglobus fulgidus (strain ATCC 49558 / DSM 4304 / JCM 9628 / NBRC 100126 / VC-16).